The chain runs to 359 residues: Transcription factor MafA (359 aa).

Ser14 carries the phosphoserine modification. Lys32 participates in a covalent cross-link: Glycyl lysine isopeptide (Lys-Gly) (interchain with G-Cter in SUMO2). Disordered stretches follow at residues 40–105 and 172–226; these read RFCH…VGGA and GGGA…AGHH. Residues 46 to 73 are compositionally biased toward low complexity; that stretch reads PPGSLSSTPLSTPCSSVPSSPSFCAPSP. At Ser49 the chain carries Phosphoserine. Phosphothreonine is present on residues Thr53 and Thr57. Phosphoserine is present on residues Ser61 and Ser65. Residues 74–84 show a composition bias toward gly residues; that stretch reads GTGGGAGGGGS. Over residues 181 to 209 the composition is skewed to basic residues; it reads GHHHGAHHTAHHHHSAHHHHHHHHHHGGS. A compositionally biased stretch (gly residues) spans 210-224; it reads GHHGGGAGHGGGGAG. The basic motif stretch occupies residues 260-285; that stretch reads RLKQKRRTLKNRGYAQSCRFKRVQQR. A bZIP domain is found at 260–323; sequence RLKQKRRTLK…DLYKEKYEKL (64 aa). Positions 288-309 are leucine-zipper; sequence LESEKCQLQSQVEQLKLEVGRL. The tract at residues 322–359 is disordered; it reads KLAGRGGPGGAGGAGFPREPSPAQAGPGAAKGAPDFFL. A compositionally biased stretch (gly residues) spans 325-336; it reads GRGGPGGAGGAG. Residues 343–359 are compositionally biased toward low complexity; it reads PAQAGPGAAKGAPDFFL.

The protein belongs to the bZIP family. Maf subfamily. In terms of assembly, forms homodimers. Interacts with NEUROD1 and PDX1. May interact with MAFB, FOS, JUN and PCAF. In terms of processing, ubiquitinated, leading to its degradation by the proteasome. Post-translationally, phosphorylated at tyrosines. In terms of tissue distribution, expressed in brain, lung, spleen, pancreas and kidney. In the pancreas, expressed in the insulin-producing beta-cells of the islets of Langerhans (at protein level). Also expressed in the eye.

Its subcellular location is the nucleus. Functionally, transcriptional factor that activates insulin gene expression. Acts synergistically with NEUROD1/BETA2 and PDX1. Binds the insulin enhancer C1/RIPE3b element. Binds to consensus TRE-type MARE 5'-TGCTGACTCAGCA-3' DNA sequence. The chain is Transcription factor MafA (Mafa) from Mus musculus (Mouse).